The primary structure comprises 427 residues: Inward rectifier potassium channel 2 (427 aa).

Residues 1 to 81 are Cytoplasmic-facing; it reads MGSVRTNRYS…IFTTCVDIRW (81 aa). An S-nitrosocysteine modification is found at cysteine 76. A helical membrane pass occupies residues 82–106; it reads RWMLVIFCLAFVLSWLFFGCVFWLI. Residues 107–128 are Extracellular-facing; the sequence is ALLHGDLDASKESKACVSEVNS. Residues 129 to 140 constitute an intramembrane region (helical; Pore-forming); that stretch reads FTAAFLFSIETQ. Positions 141-147 form an intramembrane region, pore-forming; it reads TTIGYGF. A Selectivity filter motif is present at residues 142-147; sequence TIGYGF. At 148-156 the chain is on the extracellular side; the sequence is RCVTDECPI. A helical transmembrane segment spans residues 157–178; sequence AVFMVVFQSIVGCIIDAFIIGA. The Cytoplasmic portion of the chain corresponds to 179-427; the sequence is VMAKMAKPKK…PRPLRRESEI (249 aa). The tract at residues 181 to 208 is polyphosphoinositide (PIP2)-binding; the sequence is AKMAKPKKRNETLVFSHNAVIAMRDGKL. The disordered stretch occupies residues 383-427; the sequence is TSKEEEDSENGVPESTSTDSPPGIDLHNQASVPLEPRPLRRESEI. The PDZ-binding signature appears at 425–427; it reads SEI.

The protein belongs to the inward rectifier-type potassium channel (TC 1.A.2.1) family. KCNJ2 subfamily. As to quaternary structure, homotetramer. Homomultimeric and heteromultimeric association with KCNJ4/Kir2.3. Can form heteromeric channels with Kir2.6/KCNJ18. Associates, via its PDZ-recognition domain, with a complex containing LIN7A, LIN7B, LIN7C, DLG1, CASK and APBA1. Post-translationally, S-nitrosylation increases the open probability and inward rectifying currents. As to expression, prominently expressed in the central nervous system. Also found in other excitable tissues such as heart and skeletal muscle.

It localises to the cell membrane. The protein localises to the sarcolemma. Its subcellular location is the T-tubule. The catalysed reaction is K(+)(in) = K(+)(out). Activated by phosphatidylinositol 4,5 biphosphate (PtdIns(4,5)P2). Functionally, inward rectifier potassium channels are characterized by a greater tendency to allow potassium to flow into the cell rather than out of it. Their voltage dependence is regulated by the concentration of extracellular potassium; as external potassium is raised, the voltage range of the channel opening shifts to more positive voltages. The inward rectification is mainly due to the blockage of outward current by internal magnesium. Can be blocked by extracellular barium and cesium. Probably participates in establishing action potential waveform and excitability of neuronal and muscle tissues. This Rattus norvegicus (Rat) protein is Inward rectifier potassium channel 2 (Kcnj2).